Here is a 188-residue protein sequence, read N- to C-terminus: Inosine triphosphate pyrophosphatase (188 aa).

9–14 (TGNAKK) contacts ITP. Glu39 provides a ligand contact to Mg(2+). ITP is bound by residues Lys51, 67–68 (DT), Lys84, 143–146 (FGWD), Lys166, and 171–172 (HR).

Belongs to the HAM1 NTPase family. Homodimer. Mg(2+) serves as cofactor. It depends on Mn(2+) as a cofactor.

It is found in the cytoplasm. It carries out the reaction ITP + H2O = IMP + diphosphate + H(+). The enzyme catalyses dITP + H2O = dIMP + diphosphate + H(+). It catalyses the reaction XTP + H2O = XMP + diphosphate + H(+). Functionally, pyrophosphatase that hydrolyzes non-canonical purine nucleotides such as inosine triphosphate (ITP), deoxyinosine triphosphate (dITP) or xanthosine 5'-triphosphate (XTP) to their respective monophosphate derivatives. The enzyme does not distinguish between the deoxy- and ribose forms. Probably excludes non-canonical purines from RNA and DNA precursor pools, thus preventing their incorporation into RNA and DNA and avoiding chromosomal lesions. In Anopheles gambiae (African malaria mosquito), this protein is Inosine triphosphate pyrophosphatase.